Here is a 141-residue protein sequence, read N- to C-terminus: Hemoglobin subunit alpha-A (141 aa).

Residues 1-141 (VLSSGDKANV…VSTVLTSKYR (141 aa)) enclose the Globin domain. His58 contributes to the O2 binding site. A heme b-binding site is contributed by His87.

It belongs to the globin family. Heterotetramer of two alpha chains and two beta chains. Red blood cells.

Functionally, involved in oxygen transport from the lung to the various peripheral tissues. This chain is Hemoglobin subunit alpha-A (HBAA), found in Caretta caretta (Loggerhead sea turtle).